Reading from the N-terminus, the 261-residue chain is Monensin polyketide synthase putative ketoacyl reductase (261 aa).

Residue 10–34 (LVTGATSGIGLATARLLAAQGHLVF) participates in NAD(+) binding. Ser144 is a binding site for substrate. Residue Tyr157 is the Proton acceptor of the active site.

This sequence belongs to the short-chain dehydrogenases/reductases (SDR) family.

Its pathway is antifungal biosynthesis; monensin biosynthesis. This Streptomyces virginiae (Streptomyces cinnamonensis) protein is Monensin polyketide synthase putative ketoacyl reductase.